We begin with the raw amino-acid sequence, 650 residues long: Flap endonuclease 1 (650 aa).

Residues 1–106 (MGIKGLTKFI…SELEKRGEKR (106 aa)) are N-domain. Asp34 serves as a coordination point for Mg(2+). The DNA site is built by Arg47 and Arg72. The Mg(2+) site is built by Asp88, Glu160, Glu162, Asp181, and Asp183. The interval 124–266 (EIKKQSGRTV…KTAYNLIKEY (143 aa)) is I-domain. Residue Glu160 participates in DNA binding. Residues Gly244 and Asp246 each coordinate DNA. Asp246 provides a ligand contact to Mg(2+). Residues 349–357 (TQRRLDNFF) are interaction with PCNA. The disordered stretch occupies residues 371-592 (ETKKEQTLPA…NSYNNIKNNN (222 aa)). 3 stretches are compositionally biased toward basic and acidic residues: residues 413 to 469 (MKEE…KKSL), 478 to 502 (DSDKESESGNIIKNEKQNMDDEKIN), and 511 to 524 (DHSRIRHTENKDNI). Residues 525 to 562 (SDINNNNNNNNNNSSSNNNNISNNHFNSVSSNSTFNSS) show a composition bias toward low complexity. A compositionally biased stretch (basic and acidic residues) spans 565-581 (LKSEDTLKSNSPLKEDS). The segment covering 582–592 (PNSYNNIKNNN) has biased composition (low complexity).

This sequence belongs to the XPG/RAD2 endonuclease family. FEN1 subfamily. As to quaternary structure, interacts with PCNA1 and PCNA2. Three molecules of FEN1 bind to one PCNA trimer with each molecule binding to one PCNA monomer. PCNA stimulates the nuclease activity without altering cleavage specificity. Requires Mg(2+) as cofactor. In terms of processing, phosphorylated. Phosphorylation upon DNA damage induces relocalization to the nuclear plasma.

It is found in the nucleus. The protein resides in the nucleolus. Its subcellular location is the nucleoplasm. The protein localises to the mitochondrion. Inhibited by monovalent metal ions. In terms of biological role, structure-specific nuclease with 5'-flap endonuclease and 5'-3' exonuclease activities involved in DNA replication and repair. During DNA replication, cleaves the 5'-overhanging flap structure that is generated by displacement synthesis when DNA polymerase encounters the 5'-end of a downstream Okazaki fragment. It enters the flap from the 5'-end and then tracks to cleave the flap base, leaving a nick for ligation. Also involved in the long patch base excision repair (LP-BER) pathway, by cleaving within the apurinic/apyrimidinic (AP) site-terminated flap. Acts as a genome stabilization factor that prevents flaps from equilibrating into structures that lead to duplications and deletions. Also possesses 5'-3' exonuclease activity on nicked or gapped double-stranded DNA, and exhibits RNase H activity. Also involved in replication and repair of rDNA and in repairing mitochondrial DNA. This is Flap endonuclease 1 from Plasmodium falciparum.